Here is a 51-residue protein sequence, read N- to C-terminus: Putative antitoxin VapB6 (51 aa).

Its function is as follows. Antitoxin component of a possible type II toxin-antitoxin (TA) system. The cognate toxin is VapC6. The sequence is that of Putative antitoxin VapB6 (vapB6) from Mycobacterium tuberculosis (strain CDC 1551 / Oshkosh).